Consider the following 718-residue polypeptide: Coiled-coil domain-containing protein 157 (718 aa).

The stretch at L300–Q603 forms a coiled coil. Residues R469 to L482 are compositionally biased toward basic and acidic residues. Disordered stretches follow at residues R469 to Q490 and P617 to P690. The segment covering T639–G659 has biased composition (low complexity).

This is Coiled-coil domain-containing protein 157 (Ccdc157) from Mus musculus (Mouse).